Here is a 462-residue protein sequence, read N- to C-terminus: Anthranilate synthase component 1 (462 aa).

L-tryptophan-binding positions include serine 46 and 243–245 (PHM). 278-279 (GT) contributes to the chorismate binding site. Residue glutamate 305 coordinates Mg(2+). Chorismate contacts are provided by residues tyrosine 394, arginine 414, 428 to 430 (SGG), and glycine 430. Glutamate 444 lines the Mg(2+) pocket.

Belongs to the anthranilate synthase component I family. As to quaternary structure, heterotetramer consisting of two non-identical subunits: a beta subunit (TrpG) and a large alpha subunit (TrpE). The cofactor is Mg(2+).

The catalysed reaction is chorismate + L-glutamine = anthranilate + pyruvate + L-glutamate + H(+). It participates in amino-acid biosynthesis; L-tryptophan biosynthesis; L-tryptophan from chorismate: step 1/5. Feedback inhibited by tryptophan. Part of a heterotetrameric complex that catalyzes the two-step biosynthesis of anthranilate, an intermediate in the biosynthesis of L-tryptophan. In the first step, the glutamine-binding beta subunit (TrpG) of anthranilate synthase (AS) provides the glutamine amidotransferase activity which generates ammonia as a substrate that, along with chorismate, is used in the second step, catalyzed by the large alpha subunit of AS (TrpE) to produce anthranilate. In the absence of TrpG, TrpE can synthesize anthranilate directly from chorismate and high concentrations of ammonia. This chain is Anthranilate synthase component 1 (trpE), found in Leptospira biflexa.